The chain runs to 331 residues: tRNA (guanine-N(1)-)-methyltransferase (331 aa).

Low complexity-rich tracts occupy residues 77–99 (GSDT…QATR) and 107–134 (AQPG…GRAA). A disordered region spans residues 77-137 (GSDTTARSGS…PGAGRAASSR (61 aa)). S-adenosyl-L-methionine is bound by residues Gly-169 and 193 to 198 (LGDYVL). Positions 312–331 (WQRCSPAPSEQAPEGARDMA) are disordered.

The protein belongs to the RNA methyltransferase TrmD family. As to quaternary structure, homodimer.

It is found in the cytoplasm. The catalysed reaction is guanosine(37) in tRNA + S-adenosyl-L-methionine = N(1)-methylguanosine(37) in tRNA + S-adenosyl-L-homocysteine + H(+). Specifically methylates guanosine-37 in various tRNAs. In Kocuria rhizophila (strain ATCC 9341 / DSM 348 / NBRC 103217 / DC2201), this protein is tRNA (guanine-N(1)-)-methyltransferase.